Consider the following 220-residue polypeptide: Deoxyribose-phosphate aldolase 2 (220 aa).

The active-site Proton donor/acceptor is the D89. Residue K151 is the Schiff-base intermediate with acetaldehyde of the active site. The active-site Proton donor/acceptor is the K180.

The protein belongs to the DeoC/FbaB aldolase family. DeoC type 1 subfamily.

It localises to the cytoplasm. It carries out the reaction 2-deoxy-D-ribose 5-phosphate = D-glyceraldehyde 3-phosphate + acetaldehyde. The protein operates within carbohydrate degradation; 2-deoxy-D-ribose 1-phosphate degradation; D-glyceraldehyde 3-phosphate and acetaldehyde from 2-deoxy-alpha-D-ribose 1-phosphate: step 2/2. Functionally, catalyzes a reversible aldol reaction between acetaldehyde and D-glyceraldehyde 3-phosphate to generate 2-deoxy-D-ribose 5-phosphate. This Staphylococcus aureus (strain MRSA252) protein is Deoxyribose-phosphate aldolase 2.